Consider the following 87-residue polypeptide: Mitochondrial import inner membrane translocase subunit TIM8 (87 aa).

Positions 44–68 (CFKKCVESVNDSNLSSQEEQCLSNC) match the Twin CX3C motif motif. Intrachain disulfides connect Cys-44–Cys-68 and Cys-48–Cys-64.

It belongs to the small Tim family. In terms of assembly, heterohexamer; composed of 3 copies of TIM8 and 3 copies of TIM13, named soluble 70 kDa complex. Associates with the TIM22 complex, whose core is composed of TIM18, TIM22 and TIM54. Interacts with the transmembrane regions of multi-pass transmembrane proteins in transit.

The protein localises to the mitochondrion inner membrane. The protein resides in the mitochondrion intermembrane space. Its function is as follows. Mitochondrial intermembrane chaperone that participates in the import and insertion of some multi-pass transmembrane proteins into the mitochondrial inner membrane. Also required for the transfer of beta-barrel precursors from the TOM complex to the sorting and assembly machinery (SAM complex) of the outer membrane. Acts as a chaperone-like protein that protects the hydrophobic precursors from aggregation and guide them through the mitochondrial intermembrane space. The TIM8-TIM13 complex is non essential and only mediates the import of few proteins under precise conditions, while the predominant TIM9-TIM10 70 kDa complex is crucial and mediates the import of much more proteins. Strictly required for import of TIM23 in some conditions, when a low membrane potential exists in the mitochondria. The chain is Mitochondrial import inner membrane translocase subunit TIM8 (TIM8) from Saccharomyces cerevisiae (strain ATCC 204508 / S288c) (Baker's yeast).